Consider the following 322-residue polypeptide: Heat-inducible transcription repressor HrcA (322 aa).

It belongs to the HrcA family.

Its function is as follows. Negative regulator of class I heat shock genes (grpE-dnaK-dnaJ and groELS operons). Prevents heat-shock induction of these operons. This Staphylococcus carnosus (strain TM300) protein is Heat-inducible transcription repressor HrcA.